A 571-amino-acid chain; its full sequence is RNA polymerase sigma factor SigA (571 aa).

The sigma-70 factor domain-2 stretch occupies residues 321–391 (MVESNLRLVI…TRAIADQART (71 aa)). The short motif at 345-348 (DLIQ) is the Interaction with polymerase core subunit RpoC element. A sigma-70 factor domain-3 region spans residues 400-476 (ETINKVLRGA…DTAVESPAEA (77 aa)). The interval 489–542 (VLKTLTDRERFVLIHRFGLLDGRPKTLEEVGSAFNVTRERIRQIEAKALRKMRH) is sigma-70 factor domain-4. The H-T-H motif DNA-binding region spans 515 to 534 (LEEVGSAFNVTRERIRQIEA).

It belongs to the sigma-70 factor family. RpoD/SigA subfamily. In terms of assembly, interacts transiently with the RNA polymerase catalytic core.

It is found in the cytoplasm. Sigma factors are initiation factors that promote the attachment of RNA polymerase to specific initiation sites and are then released. This sigma factor is the primary sigma factor during exponential growth. The sequence is that of RNA polymerase sigma factor SigA from Chlamydia muridarum (strain MoPn / Nigg).